Reading from the N-terminus, the 672-residue chain is Rho GTPase-activating protein 40 (672 aa).

The interval 43-68 is disordered; sequence GCSPGLSTGPTNLQQHPQKPRPADCS. Residues 47–59 show a composition bias toward polar residues; sequence GLSTGPTNLQQHP. Positions 321 to 519 constitute a Rho-GAP domain; it reads VPLHSLLEAD…MMVQYQDLLW (199 aa).

Functionally, GTPase activator for the Rho-type GTPases by converting them to an inactive GDP-bound state. The protein is Rho GTPase-activating protein 40 of Mus musculus (Mouse).